The primary structure comprises 387 residues: Alanine racemase (387 aa).

Lys-48 functions as the Proton acceptor; specific for D-alanine in the catalytic mechanism. N6-(pyridoxal phosphate)lysine is present on Lys-48. Position 146 (Arg-146) interacts with substrate. The active-site Proton acceptor; specific for L-alanine is Tyr-267. Met-315 provides a ligand contact to substrate.

It belongs to the alanine racemase family. Requires pyridoxal 5'-phosphate as cofactor.

The enzyme catalyses L-alanine = D-alanine. The protein operates within amino-acid biosynthesis; D-alanine biosynthesis; D-alanine from L-alanine: step 1/1. In terms of biological role, catalyzes the interconversion of L-alanine and D-alanine. May also act on other amino acids. This chain is Alanine racemase (alr), found in Methylacidiphilum infernorum (isolate V4) (Methylokorus infernorum (strain V4)).